The following is a 306-amino-acid chain: 4-diphosphocytidyl-2-C-methyl-D-erythritol kinase (306 aa).

The active site involves Lys-11. 98–108 (PIAGGMGGGSA) contributes to the ATP binding site. Asp-140 is a catalytic residue.

Belongs to the GHMP kinase family. IspE subfamily.

It catalyses the reaction 4-CDP-2-C-methyl-D-erythritol + ATP = 4-CDP-2-C-methyl-D-erythritol 2-phosphate + ADP + H(+). It functions in the pathway isoprenoid biosynthesis; isopentenyl diphosphate biosynthesis via DXP pathway; isopentenyl diphosphate from 1-deoxy-D-xylulose 5-phosphate: step 3/6. In terms of biological role, catalyzes the phosphorylation of the position 2 hydroxy group of 4-diphosphocytidyl-2C-methyl-D-erythritol. The polypeptide is 4-diphosphocytidyl-2-C-methyl-D-erythritol kinase (Leifsonia xyli subsp. xyli (strain CTCB07)).